A 179-amino-acid polypeptide reads, in one-letter code: Large ribosomal subunit protein uL5 (179 aa).

It belongs to the universal ribosomal protein uL5 family. Part of the 50S ribosomal subunit; part of the 5S rRNA/L5/L18/L25 subcomplex. Contacts the 5S rRNA and the P site tRNA. Forms a bridge to the 30S subunit in the 70S ribosome.

Its function is as follows. This is one of the proteins that bind and probably mediate the attachment of the 5S RNA into the large ribosomal subunit, where it forms part of the central protuberance. In the 70S ribosome it contacts protein S13 of the 30S subunit (bridge B1b), connecting the 2 subunits; this bridge is implicated in subunit movement. Contacts the P site tRNA; the 5S rRNA and some of its associated proteins might help stabilize positioning of ribosome-bound tRNAs. This Nitrosomonas eutropha (strain DSM 101675 / C91 / Nm57) protein is Large ribosomal subunit protein uL5.